We begin with the raw amino-acid sequence, 158 residues long: Small ribosomal subunit protein uS7 (158 aa).

The protein belongs to the universal ribosomal protein uS7 family. In terms of assembly, part of the 30S ribosomal subunit. Contacts proteins S9 and S11.

Its function is as follows. One of the primary rRNA binding proteins, it binds directly to 16S rRNA where it nucleates assembly of the head domain of the 30S subunit. Is located at the subunit interface close to the decoding center, probably blocks exit of the E-site tRNA. This is Small ribosomal subunit protein uS7 from Bacteroides fragilis (strain YCH46).